A 345-amino-acid polypeptide reads, in one-letter code: Protein-glutamate methylesterase/protein-glutamine glutaminase 2 (345 aa).

A Response regulatory domain is found at 1 to 116 (MVVDDSAVVR…KQFLVDASDD (116 aa)). D50 bears the 4-aspartylphosphate mark. The CheB-type methylesterase domain occupies 154-345 (LQTTERVVAL…AREIMAQMAG (192 aa)). Active-site residues include S166, H192, and D288.

The protein belongs to the CheB family. In terms of processing, phosphorylated by CheA. Phosphorylation of the N-terminal regulatory domain activates the methylesterase activity.

The protein resides in the cytoplasm. The enzyme catalyses [protein]-L-glutamate 5-O-methyl ester + H2O = L-glutamyl-[protein] + methanol + H(+). The catalysed reaction is L-glutaminyl-[protein] + H2O = L-glutamyl-[protein] + NH4(+). Functionally, involved in chemotaxis. Part of a chemotaxis signal transduction system that modulates chemotaxis in response to various stimuli. Catalyzes the demethylation of specific methylglutamate residues introduced into the chemoreceptors (methyl-accepting chemotaxis proteins or MCP) by CheR. Also mediates the irreversible deamidation of specific glutamine residues to glutamic acid. This is Protein-glutamate methylesterase/protein-glutamine glutaminase 2 from Albidiferax ferrireducens (strain ATCC BAA-621 / DSM 15236 / T118) (Rhodoferax ferrireducens).